The primary structure comprises 196 residues: Large ribosomal subunit protein uL18 (196 aa).

The protein belongs to the universal ribosomal protein uL18 family. In terms of assembly, part of the 50S ribosomal subunit. Contacts the 5S and 23S rRNAs.

Functionally, this is one of the proteins that bind and probably mediate the attachment of the 5S RNA into the large ribosomal subunit, where it forms part of the central protuberance. The sequence is that of Large ribosomal subunit protein uL18 from Saccharolobus islandicus (strain L.S.2.15 / Lassen #1) (Sulfolobus islandicus).